Here is a 550-residue protein sequence, read N- to C-terminus: Glucose-6-phosphate isomerase (550 aa).

Glutamate 356 functions as the Proton donor in the catalytic mechanism. Residues histidine 387 and lysine 515 contribute to the active site.

This sequence belongs to the GPI family.

It is found in the cytoplasm. It catalyses the reaction alpha-D-glucose 6-phosphate = beta-D-fructose 6-phosphate. Its pathway is carbohydrate biosynthesis; gluconeogenesis. It functions in the pathway carbohydrate degradation; glycolysis; D-glyceraldehyde 3-phosphate and glycerone phosphate from D-glucose: step 2/4. Its function is as follows. Catalyzes the reversible isomerization of glucose-6-phosphate to fructose-6-phosphate. This is Glucose-6-phosphate isomerase from Vibrio atlanticus (strain LGP32) (Vibrio splendidus (strain Mel32)).